We begin with the raw amino-acid sequence, 338 residues long: 1-aminocyclopropane-1-carboxylate deaminase (338 aa).

Position 51 is an N6-(pyridoxal phosphate)lysine (Lys-51). The Nucleophile role is filled by Ser-78.

Belongs to the ACC deaminase/D-cysteine desulfhydrase family. As to quaternary structure, homotrimer. It depends on pyridoxal 5'-phosphate as a cofactor.

It carries out the reaction 1-aminocyclopropane-1-carboxylate + H2O = 2-oxobutanoate + NH4(+). In terms of biological role, catalyzes a cyclopropane ring-opening reaction, the irreversible conversion of 1-aminocyclopropane-1-carboxylate (ACC) to ammonia and alpha-ketobutyrate. Allows growth on ACC as a nitrogen source. This Burkholderia thailandensis (strain ATCC 700388 / DSM 13276 / CCUG 48851 / CIP 106301 / E264) protein is 1-aminocyclopropane-1-carboxylate deaminase.